A 353-amino-acid chain; its full sequence is uncharacterized protein (353 aa).

Residues 18 to 83 (NIEFPCLLSE…TLWRDVFLRF (66 aa)) enclose the HTH luxR-type domain. Residues 42–61 (VNEISKRRNRSIKTVSCQKM) constitute a DNA-binding region (H-T-H motif). Residues 98 to 350 (NSSVLPVVSS…AFVRKLLASL (253 aa)) form the EAL domain.

This is an uncharacterized protein from Escherichia coli (strain K12).